Reading from the N-terminus, the 86-residue chain is Large ribosomal subunit protein bL27 (86 aa).

Positions 1–24 are disordered; sequence MAHKKGTGSTRNGRDSNSKRLGVK.

Belongs to the bacterial ribosomal protein bL27 family.

This Prochlorococcus marinus (strain MIT 9301) protein is Large ribosomal subunit protein bL27.